We begin with the raw amino-acid sequence, 200 residues long: Serine/threonine-protein kinase mos (200 aa).

One can recognise a Protein kinase domain in the interval 2–200 (LCLLQPLGSG…ELLKGERVTA (199 aa)). Residues 8–16 (LGSGGFGSV) and Lys-29 each bind ATP. Residue Asp-143 is the Proton acceptor of the active site.

It belongs to the protein kinase superfamily. Ser/Thr protein kinase family.

It carries out the reaction L-seryl-[protein] + ATP = O-phospho-L-seryl-[protein] + ADP + H(+). The enzyme catalyses L-threonyl-[protein] + ATP = O-phospho-L-threonyl-[protein] + ADP + H(+). This is Serine/threonine-protein kinase mos (MOS) from Ciconia nigra (Black stork).